A 299-amino-acid chain; its full sequence is GTP cyclohydrolase FolE2 (299 aa).

The protein belongs to the GTP cyclohydrolase IV family.

It catalyses the reaction GTP + H2O = 7,8-dihydroneopterin 3'-triphosphate + formate + H(+). It functions in the pathway cofactor biosynthesis; 7,8-dihydroneopterin triphosphate biosynthesis; 7,8-dihydroneopterin triphosphate from GTP: step 1/1. Converts GTP to 7,8-dihydroneopterin triphosphate. This is GTP cyclohydrolase FolE2 from Citrobacter koseri (strain ATCC BAA-895 / CDC 4225-83 / SGSC4696).